Here is a 134-residue protein sequence, read N- to C-terminus: Arsenate reductase (134 aa).

Residues Cys11, Cys83, and Cys90 each act as nucleophile in the active site. Cystine bridges form between Cys11-Cys83 and Cys83-Cys90.

Belongs to the low molecular weight phosphotyrosine protein phosphatase family. Thioredoxin-coupled ArsC subfamily.

The protein resides in the cytoplasm. It carries out the reaction arsenate + [thioredoxin]-dithiol + H(+) = arsenite + [thioredoxin]-disulfide + H2O. In terms of biological role, catalyzes the reduction of arsenate [As(V)] to arsenite [As(III)]. The chain is Arsenate reductase from Bacillus cereus (strain Q1).